Reading from the N-terminus, the 1320-residue chain is Sal-like protein 3 (1320 aa).

A compositionally biased stretch (basic residues) spans 1 to 11 (MSRRKQAKPQH). A disordered region spans residues 1 to 49 (MSRRKQAKPQHLKSDEELPPQDGASEHGVPGDGAEDADSGSESRSGSEE). A compositionally biased stretch (low complexity) spans 40–49 (GSESRSGSEE). The segment at 51-73 (SVCEKCCAEFFKWADFLQHKKTC) adopts a C2H2-type 1; atypical zinc-finger fold. 2 disordered regions span residues 84–166 (DDEP…AFSM) and 271–367 (LSAG…NLPN). The span at 88-100 (APPSEDFPEPSPA) shows a compositional bias: pro residues. Residue S109 is modified to Phosphoserine. A compositionally biased stretch (basic and acidic residues) spans 121–131 (SEVKAATKEAE). Positions 143–160 (PPGPSVPPPPPALPPQPE) are enriched in pro residues. The segment covering 271–289 (LSAGPATASAGSGSTLPAA) has biased composition (low complexity). Residues 295–311 (HLSQPASGTSTPCSTSA) show a composition bias toward polar residues. 2 stretches are compositionally biased toward low complexity: residues 323–342 (STGP…GNAV) and 355–367 (PGPL…NLPN). 2 consecutive C2H2-type zinc fingers follow at residues 427–449 (HKCR…LRSH) and 455–477 (FKCN…FQRH). Positions 534–623 (GLQLPPTVPG…RTGDAPVVGG (90 aa)) are disordered. Polar residues predominate over residues 543–554 (GTHNYTDSPSIT). Residues 555–568 (PVSRSPQRPSPASS) are compositionally biased toward low complexity. Polar residues predominate over residues 569–583 (ECTSLSPGLNNTESG). 3 consecutive C2H2-type zinc fingers follow at residues 692–714 (NQCV…YRTH), 720–742 (FKCK…FGVH), and 752–774 (HSCP…IRMH). 2 disordered regions span residues 807 to 846 (SSFD…PPSP) and 878 to 972 (VENG…GHPG). Residues 809–823 (FDDDIDENSMEEDSE) are compositionally biased toward acidic residues. Composition is skewed to low complexity over residues 834 to 846 (PLLS…PPSP) and 902 to 923 (RSAG…PAHS). S932 bears the Phosphoserine mark. 4 C2H2-type zinc fingers span residues 997 to 1019 (TVCG…YRSH), 1025 to 1047 (FVCT…LLTH), 1133 to 1155 (HNCQ…ERTH), and 1161 to 1183 (FGCT…MGTH). S1197 bears the Phosphoserine mark.

Belongs to the sal C2H2-type zinc-finger protein family. In terms of tissue distribution, in adult brain, testis and kidney. In lower levels also in adult ovaries and embryonic stem cells. In embryo in developing neuroectoderm of brain, inner ear and spinal cord. Also weakly and transiently expressed in embryonic branchial arches, notochord, limb buds and heart.

Its subcellular location is the nucleus. In terms of biological role, probable transcription factor. The sequence is that of Sal-like protein 3 (Sall3) from Mus musculus (Mouse).